Reading from the N-terminus, the 1172-residue chain is MALFPAFADVSEASGDGAFRKELDWLSNPSFRVGNLTSLSRQTEEVTALASEGSPPPRYSFIRSPLKSELSGESNTSEKLAQTSRKKKKEKKKRRKHQHHRKTKRRHEQLSSSGSESDTEAGKDRASRSIRDDQKEAEKPCQGSNAAAAVAAAAGHRSIWLEDIHDLTDVFRTDKKPDPANWEYKSLYRGDIARYKRKGDSCLGINPKKQCISWEGASAAKKHSHRHLERYFTKKNVGLMRTEGIAVCSNPEPASSEPVTFIPVKDSAEAATPVTSWLNPLGIYDQSTTQWLQGQGPAEQESKQPDSQQDRENAALKARVEEFNRRVRENPWDTQLWMAFVAFQDEVMRSPGIYALGEGEQEKHRKSLKLLLEKKLAVLERAIESNPGSVELKLAKLQLCSEFWEPSALAKEWQKLLFLHPNNTSLWQRYLSFCQSQFGTFSVSKLHSLYGKCLSTLSAVKDGSMLSHPVLPGTEEAMFGLFLQQCHFLRQAGHSEKVISLFQAMVDFTFFKPDSVKELPTKVQVEFFEPFWDSGEPRVGEKGARGWRAWMHQQERGGWVLITPDEDDEEPEEEDQEIKDKTLPRWQIWLAVERSRDQRHWRPWRPDKTKKQTEEDCEDPERQVLFDDIGQSLIRLSSPDLQFQLIQAFLQFLGVPSGFLPPASCLYLAMDESSIFESELYDEKPLTYFNPSFSGISCVGSMEQLGRPRWTKGHNREGEEFVRNVFHLVLPLLAGKQKSQLSLSWLRYEIAKVIWCLHTKKKRLKSQGKSCKKLAKNLLKEPENRNNFCLWKQYAHLEWLLGNTEDARKVFDTALSMAGSSELKDRELCELSLLYAELEMELSPDSRGATTGRAVHILTRLTESSPYGPYTGQVSSTQVLKARKAYELALQDCLGQSCASSPAPAEALDCLGSLVRCFMLFQYLTVGIDAAVQIYGRVFAKLKGSARLEDPGPEDSTSSQSLTNVLEAVSMMHTSLLRFHMNVCVYPLAPLRETLSDALKLYPGNQVLWRAYVQIQNKSHSANKTRRFFDTVTRSAKHLEPWLFAIEAEKLRKKLVESVQRVGGREVHATIPETGLTHRIRALFENAIRSDKGNQCPLLWRMYLNFLVSLGNKERSKGVFYKALQSCPWAKVLYMDAMEYFPDELQEILDVMTEKELRVRLPLEELELLLED.

An N-acetylalanine modification is found at Ala2. The interval 46–144 (VTALASEGSP…KEAEKPCQGS (99 aa)) is disordered. Residues 71–83 (SGESNTSEKLAQT) are compositionally biased toward polar residues. A coiled-coil region spans residues 78 to 330 (EKLAQTSRKK…EEFNRRVREN (253 aa)). Residues 84 to 107 (SRKKKKEKKKRRKHQHHRKTKRRH) show a composition bias toward basic residues. Residues 120 to 139 (EAGKDRASRSIRDDQKEAEK) are compositionally biased toward basic and acidic residues. The MID/MTR4-interacting domain stretch occupies residues 171 to 275 (FRTDKKPDPA…DSAEAATPVT (105 aa)). The disordered stretch occupies residues 292-313 (LQGQGPAEQESKQPDSQQDREN). The span at 300–313 (QESKQPDSQQDREN) shows a compositional bias: basic and acidic residues. 5 HAT repeats span residues 314 to 346 (AALKARVEEFNRRVRENPWDTQLWMAFVAFQDE), 404 to 436 (WEPSALAKEWQKLLFLHPNNTSLWQRYLSFCQS), 766 to 800 (SQGKSCKKLAKNLLKEPENRNNFCLWKQYAHLEWL), 986 to 1018 (YPLAPLRETLSDALKLYPGNQVLWRAYVQIQNK), and 1075 to 1109 (GLTHRIRALFENAIRSDKGNQCPLLWRMYLNFLVS).

It belongs to the NRDE2 family. As to quaternary structure, interacts with MTREX; the interaction is direct and stabilizes NRDE2. Interacts with EXOSC10, EFTUD2 and EIF4A3.

Its subcellular location is the nucleus speckle. It is found in the nucleus. The protein localises to the nucleolus. The protein resides in the nucleoplasm. In terms of biological role, protein of the nuclear speckles that regulates RNA degradation and export from the nucleus through its interaction with MTREX an essential factor directing various RNAs to exosomal degradation. Changes the conformation of MTREX, precluding its association with the nuclear exosome and interaction with proteins required for its function in RNA exosomal degradation. Negatively regulates, for instance, the degradation of mRNAs and lncRNAs by inhibiting their MTREX-mediated recruitment to nuclear exosome. By preventing the degradation of RNAs in the nucleus, it promotes their export to the cytoplasm. U5 snRNP-associated RNA splicing factor which is required for efficient splicing of CEP131 pre-mRNA and plays an important role in centrosome maturation, integrity and function during mitosis. Suppresses intron retention in a subset of pre-mRNAs containing short, GC-rich introns with relatively weak 5' and 3' splice sites. Plays a role in DNA damage response. This Mus musculus (Mouse) protein is Nuclear exosome regulator NRDE2 (Nrde2).